The chain runs to 89 residues: Arminin 7519 (89 aa).

An N-terminal signal peptide occupies residues 1 to 18; it reads MRSTFAVLFLALIALTYS. The propeptide occupies 19–59; sequence KNYQDVKEEIKNEVENEILRDLGEDDDELDDNAQEAVNDAR. Alanine 86 carries the post-translational modification Alanine amide.

It belongs to the arminin family. In terms of tissue distribution, expressed in entodermal epithelium along the body column.

It is found in the secreted. It localises to the target cell membrane. Its function is as follows. Antimicrobial peptide with a broad-spectrum antimicrobial activity. Keeps its antibacterial activity under a wide range of salt concentrations that mimic physiological conditions of human blood, which is surprising, since Hydra is an obligate freshwater animal with nearly no salt tolerance. Does not affect red blood cells. The sequence is that of Arminin 7519 from Hydra vulgaris (Hydra).